A 445-amino-acid chain; its full sequence is Glutamate--tRNA ligase 1 (445 aa).

Residues 9 to 19 (PSPTGYLHVGN) carry the 'HIGH' region motif. Positions 238 to 242 (KISKR) match the 'KMSKS' region motif. K241 contributes to the ATP binding site.

It belongs to the class-I aminoacyl-tRNA synthetase family. Glutamate--tRNA ligase type 1 subfamily. Monomer.

Its subcellular location is the cytoplasm. The enzyme catalyses tRNA(Glu) + L-glutamate + ATP = L-glutamyl-tRNA(Glu) + AMP + diphosphate. Catalyzes the attachment of glutamate to tRNA(Glu) in a two-step reaction: glutamate is first activated by ATP to form Glu-AMP and then transferred to the acceptor end of tRNA(Glu). This Ehrlichia ruminantium (strain Gardel) protein is Glutamate--tRNA ligase 1.